We begin with the raw amino-acid sequence, 58 residues long: Large ribosomal subunit protein uL30 (58 aa).

It belongs to the universal ribosomal protein uL30 family. Part of the 50S ribosomal subunit.

The sequence is that of Large ribosomal subunit protein uL30 from Pseudomonas fluorescens (strain ATCC BAA-477 / NRRL B-23932 / Pf-5).